An 86-amino-acid polypeptide reads, in one-letter code: Small ribosomal subunit protein uS17 (86 aa).

The protein belongs to the universal ribosomal protein uS17 family. As to quaternary structure, part of the 30S ribosomal subunit.

Its function is as follows. One of the primary rRNA binding proteins, it binds specifically to the 5'-end of 16S ribosomal RNA. The polypeptide is Small ribosomal subunit protein uS17 (Lactococcus lactis subsp. cremoris (strain SK11)).